We begin with the raw amino-acid sequence, 609 residues long: Arginine--tRNA ligase (609 aa).

The 'HIGH' region signature appears at 132-142 (ANPTSSLHVGH).

It belongs to the class-I aminoacyl-tRNA synthetase family. In terms of assembly, monomer.

The protein resides in the cytoplasm. The catalysed reaction is tRNA(Arg) + L-arginine + ATP = L-arginyl-tRNA(Arg) + AMP + diphosphate. The sequence is that of Arginine--tRNA ligase from Psychrobacter sp. (strain PRwf-1).